We begin with the raw amino-acid sequence, 434 residues long: Sodium/bile acid cotransporter 5 (434 aa).

A signal peptide spans 1–18 (MSGKLFIILLLLVTPGEA). At 19–129 (RKSFLRFLNI…VSVFRQTEDS (111 aa)) the chain is on the extracellular side. 2 N-linked (GlcNAc...) asparagine glycosylation sites follow: Asn73 and Asn96. The chain crosses the membrane as a helical span at residues 130–150 (LFQEPIHVNSSVFLLVLLMIL). The Cytoplasmic segment spans residues 151 to 172 (LNKCAFGCKIELQVLQTVWKRP). The chain crosses the membrane as a helical span at residues 173 to 193 (LPILLGAVTQFFLMPFCGFLL). Over 194–195 (SQ) the chain is Extracellular. A helical transmembrane segment spans residues 196 to 216 (ILGLSKAQAFGFVMTCTCPGG). Topologically, residues 217 to 232 (GGGYLFALLLEGDVTL) are cytoplasmic. A helical membrane pass occupies residues 233–255 (AILMACTSTSLALIMMPVNSYLY). At 256–268 (SCLLGLAGVFHVP) the chain is on the extracellular side. The helical transmembrane segment at 269-289 (VLKIVSTLLFILTPVSIGIVI) threads the bilayer. Topologically, residues 290–306 (KHRMPKKAVCLERVVQP) are cytoplasmic. Residues 307–327 (LSLTLMLVGVYLAFRMGLVFL) traverse the membrane as a helical segment. At 328–331 (RMAN) the chain is on the extracellular side. Residues 332–352 (LEVFLLGLLVPVLGFSFGYSF) traverse the membrane as a helical segment. Topologically, residues 353–365 (AKVYLLPLPVCKT) are cytoplasmic. A helical membrane pass occupies residues 366-386 (VAIESGMLNSFLALAIIQLSF). The Extracellular portion of the chain corresponds to 387–395 (PQSKAYEAS). The chain crosses the membrane as a helical span at residues 396-416 (VAPFTVAMCSSCEMLLLLLVY). Over 417-434 (KAKKRPLLSTENEKAPLV) the chain is Cytoplasmic.

This sequence belongs to the bile acid:sodium symporter (BASS) (TC 2.A.28) family.

It localises to the membrane. The chain is Sodium/bile acid cotransporter 5 (Slc10a5) from Rattus norvegicus (Rat).